The chain runs to 284 residues: D-tagatose-1,6-bisphosphate aldolase subunit GatY (284 aa).

Catalysis depends on aspartate 82, which acts as the Proton donor. 2 residues coordinate Zn(2+): histidine 83 and histidine 180. Position 181 (glycine 181) interacts with dihydroxyacetone phosphate. Histidine 208 contacts Zn(2+). Residues 209–211 and 230–233 each bind dihydroxyacetone phosphate; these read GAS and NVAT.

The protein belongs to the class II fructose-bisphosphate aldolase family. TagBP aldolase GatY subfamily. As to quaternary structure, forms a complex with GatZ. It depends on Zn(2+) as a cofactor.

It carries out the reaction D-tagatofuranose 1,6-bisphosphate = D-glyceraldehyde 3-phosphate + dihydroxyacetone phosphate. It participates in carbohydrate metabolism; D-tagatose 6-phosphate degradation; D-glyceraldehyde 3-phosphate and glycerone phosphate from D-tagatose 6-phosphate: step 2/2. Catalytic subunit of the tagatose-1,6-bisphosphate aldolase GatYZ, which catalyzes the reversible aldol condensation of dihydroxyacetone phosphate (DHAP or glycerone-phosphate) with glyceraldehyde 3-phosphate (G3P) to produce tagatose 1,6-bisphosphate (TBP). Requires GatZ subunit for full activity and stability. Is involved in the catabolism of galactitol. The polypeptide is D-tagatose-1,6-bisphosphate aldolase subunit GatY (Salmonella choleraesuis (strain SC-B67)).